A 296-amino-acid chain; its full sequence is Biliverdin reductase A (296 aa).

The propeptide occupies 1 to 2 (MN). NADP(+)-binding positions include 16–19 (VGRA), 44–46 (SRR), 77–80 (SSSH), and Tyr-98. The residue at position 174 (Thr-174) is a Phosphothreonine. A phosphoserine mark is found at Ser-178 and Ser-230. 2 positions are modified to N6-acetyllysine: Lys-248 and Lys-253. 4 residues coordinate Zn(2+): His-280, Cys-281, Cys-292, and Cys-293.

It belongs to the Gfo/Idh/MocA family. Biliverdin reductase subfamily. Monomer. Zn(2+) is required as a cofactor. In terms of tissue distribution, liver.

Its subcellular location is the cytoplasm. It localises to the cytosol. It carries out the reaction (4Z,15Z)-bilirubin IXalpha + NAD(+) = biliverdin IXalpha + NADH + H(+). The enzyme catalyses (4Z,15Z)-bilirubin IXalpha + NADP(+) = biliverdin IXalpha + NADPH + H(+). It functions in the pathway porphyrin-containing compound metabolism; protoheme degradation. Reduces the gamma-methene bridge of the open tetrapyrrole, biliverdin IXalpha, to bilirubin with the concomitant oxidation of a NADH or NADPH cofactor. Does not reduce bilirubin IXbeta. Uses the reactants NADH or NADPH depending on the pH; NADH is used at the acidic pH range (6-6.9) and NADPH at the alkaline range (8.5-8.7). NADPH, however, is the probable reactant in biological systems. The polypeptide is Biliverdin reductase A (Homo sapiens (Human)).